We begin with the raw amino-acid sequence, 437 residues long: Adenylosuccinate synthetase (437 aa).

Residues 12-18 and 40-42 each bind GTP; these read GDEGKGK and GHT. Asp-13 acts as the Proton acceptor in catalysis. Asp-13 and Gly-40 together coordinate Mg(2+). IMP-binding positions include 13–16, 38–41, Thr-128, Arg-142, Gln-223, Thr-238, and Arg-302; these read DEGK and NAGH. The Proton donor role is filled by His-41. 298 to 304 serves as a coordination point for substrate; the sequence is TTTGRRR. Residues Arg-304, 330 to 332, and 412 to 414 contribute to the GTP site; these read KLD and SLG.

This sequence belongs to the adenylosuccinate synthetase family. Homodimer. The cofactor is Mg(2+).

Its subcellular location is the cytoplasm. The catalysed reaction is IMP + L-aspartate + GTP = N(6)-(1,2-dicarboxyethyl)-AMP + GDP + phosphate + 2 H(+). The protein operates within purine metabolism; AMP biosynthesis via de novo pathway; AMP from IMP: step 1/2. In terms of biological role, plays an important role in the de novo pathway of purine nucleotide biosynthesis. Catalyzes the first committed step in the biosynthesis of AMP from IMP. The polypeptide is Adenylosuccinate synthetase (Parasynechococcus marenigrum (strain WH8102)).